The sequence spans 225 residues: Cbp/p300-interacting transactivator 2 (225 aa).

This sequence belongs to the CITED family.

Its subcellular location is the nucleus. Functionally, transcriptional coactivator or corepressor of the p300/CBP-mediated transcription complex. May be involved in sex determination, early gonad development, left-right patterning during embryogenesis and differentiation of the adrenal cortex. The sequence is that of Cbp/p300-interacting transactivator 2 (cited2) from Xenopus laevis (African clawed frog).